A 484-amino-acid polypeptide reads, in one-letter code: Glycogen synthase (484 aa).

K15 contributes to the ADP-alpha-D-glucose binding site.

Belongs to the glycosyltransferase 1 family. Bacterial/plant glycogen synthase subfamily.

The enzyme catalyses [(1-&gt;4)-alpha-D-glucosyl](n) + ADP-alpha-D-glucose = [(1-&gt;4)-alpha-D-glucosyl](n+1) + ADP + H(+). Its pathway is glycan biosynthesis; glycogen biosynthesis. Functionally, synthesizes alpha-1,4-glucan chains using ADP-glucose. This is Glycogen synthase from Bacillus licheniformis (strain ATCC 14580 / DSM 13 / JCM 2505 / CCUG 7422 / NBRC 12200 / NCIMB 9375 / NCTC 10341 / NRRL NRS-1264 / Gibson 46).